A 214-amino-acid polypeptide reads, in one-letter code: Nucleoside triphosphate pyrophosphatase (214 aa).

The Proton acceptor role is filled by D79.

Belongs to the Maf family. A divalent metal cation is required as a cofactor.

It is found in the cytoplasm. The catalysed reaction is a ribonucleoside 5'-triphosphate + H2O = a ribonucleoside 5'-phosphate + diphosphate + H(+). It carries out the reaction a 2'-deoxyribonucleoside 5'-triphosphate + H2O = a 2'-deoxyribonucleoside 5'-phosphate + diphosphate + H(+). Nucleoside triphosphate pyrophosphatase. May have a dual role in cell division arrest and in preventing the incorporation of modified nucleotides into cellular nucleic acids. In Rhodococcus opacus (strain B4), this protein is Nucleoside triphosphate pyrophosphatase.